We begin with the raw amino-acid sequence, 219 residues long: Large ribosomal subunit protein uL29m (219 aa).

The tract at residues Ala77–Thr97 is disordered. Basic and acidic residues predominate over residues Ser87–Thr97.

Belongs to the universal ribosomal protein uL29 family. Component of the mitochondrial large ribosomal subunit. Mature mitochondrial ribosomes consist of a small (37S) and a large (54S) subunit. The 37S subunit contains at least 33 different proteins and 1 molecule of RNA (15S). The 54S subunit contains at least 45 different proteins and 1 molecule of RNA (21S).

It is found in the mitochondrion. This is Large ribosomal subunit protein uL29m (mrpl4) from Emericella nidulans (strain FGSC A4 / ATCC 38163 / CBS 112.46 / NRRL 194 / M139) (Aspergillus nidulans).